Reading from the N-terminus, the 331-residue chain is Aldo-keto reductase family 7 member A3 (331 aa).

Phosphoserine is present on serine 6. 3 residues coordinate NADPH: methionine 17, aspartate 44, and tyrosine 49. Tyrosine 49 functions as the Proton donor in the catalytic mechanism. Residue serine 85 is modified to Phosphoserine. NADPH contacts are provided by histidine 113, serine 143, asparagine 144, asparagine 198, leucine 200, glycine 202, lysine 208, tyrosine 209, and arginine 222. The residue at position 227 (threonine 227) is a Phosphothreonine. Positions 290, 294, and 298 each coordinate NADPH.

This sequence belongs to the aldo/keto reductase family. Aldo/keto reductase 2 subfamily. Homodimer. In terms of tissue distribution, expressed in colon, kidney, liver, pancreas, adenocarcinoma and endometrium.

The protein resides in the cytoplasm. The enzyme catalyses a primary alcohol + NADP(+) = an aldehyde + NADPH + H(+). It catalyses the reaction aflatoxin B1 dialdehyde + NADPH + H(+) = aflatoxin B1 C(6a)-monoaldehyde + NADP(+). The catalysed reaction is aflatoxin B1 dialdehyde + NADPH + H(+) = aflatoxin B1 C(8)-monoaldehyde + NADP(+). It carries out the reaction aflatoxin B1 C(6a)-monoaldehyde + NADPH + 2 H(+) = aflatoxin B1 triol + NADP(+). With respect to regulation, inhibited by citrate. Functionally, catalyzes the NADPH-dependent reduction of various carbonyl-containing compounds, including aldehydes, ketones, and toxic products from cellular metabolism or environmental exposure. Can reduce the dialdehyde form of aflatoxin B1 (AFB1) into alcohol derivatives, via monoaldehydes intermediates. Can reduce the dialdehyde form of aflatoxin B1 (AFB1) into alcohol derivatives, via monoaldehydes intermediates, thus preventing the formation of protein adducts that contribute to AFB1-induced toxicity. The polypeptide is Aldo-keto reductase family 7 member A3 (Homo sapiens (Human)).